We begin with the raw amino-acid sequence, 278 residues long: 4-hydroxy-tetrahydrodipicolinate reductase (278 aa).

NAD(+) is bound by residues 13–18 (GAAGKM) and 111–113 (GTT). His-167 functions as the Proton donor/acceptor in the catalytic mechanism. His-168 lines the (S)-2,3,4,5-tetrahydrodipicolinate pocket. The active-site Proton donor is the Lys-171. 177 to 178 (GT) contributes to the (S)-2,3,4,5-tetrahydrodipicolinate binding site.

The protein belongs to the DapB family.

It localises to the cytoplasm. It catalyses the reaction (S)-2,3,4,5-tetrahydrodipicolinate + NAD(+) + H2O = (2S,4S)-4-hydroxy-2,3,4,5-tetrahydrodipicolinate + NADH + H(+). The enzyme catalyses (S)-2,3,4,5-tetrahydrodipicolinate + NADP(+) + H2O = (2S,4S)-4-hydroxy-2,3,4,5-tetrahydrodipicolinate + NADPH + H(+). The protein operates within amino-acid biosynthesis; L-lysine biosynthesis via DAP pathway; (S)-tetrahydrodipicolinate from L-aspartate: step 4/4. Functionally, catalyzes the conversion of 4-hydroxy-tetrahydrodipicolinate (HTPA) to tetrahydrodipicolinate. In Nostoc punctiforme (strain ATCC 29133 / PCC 73102), this protein is 4-hydroxy-tetrahydrodipicolinate reductase.